Consider the following 313-residue polypeptide: MKKQLIIGTRSSPLALWQAEFTKAELSRHYPELDITLKLVKTTGDVLLDSPLSKIGDMGLFTKDIEKHLIAKEIDLAVHSLKDVPTSTPEGLIITSFTEREDTRDVIISRSGETLLNLPQNARIATSSLRRMSQLLSMRPDFEICDIRGNLNTRFKKFDEGEFDAMMLAYAGVFRLKFSDRISEILPHDVMLPAVGQGALGIETRVDDEQTREIVRILNHSNTEYCCRAERALLRHLQGGCQIPIGAYASFKNGTLKLLAFVGSVNGKIGLRNEITKTGLVSPEQAEEAGIELAKELLKQGADEILSEIRKTR.

The residue at position 241 (Cys-241) is an S-(dipyrrolylmethanemethyl)cysteine.

It belongs to the HMBS family. Monomer. The cofactor is dipyrromethane.

It catalyses the reaction 4 porphobilinogen + H2O = hydroxymethylbilane + 4 NH4(+). It participates in porphyrin-containing compound metabolism; protoporphyrin-IX biosynthesis; coproporphyrinogen-III from 5-aminolevulinate: step 2/4. The protein operates within porphyrin-containing compound metabolism; chlorophyll biosynthesis. Functionally, tetrapolymerization of the monopyrrole PBG into the hydroxymethylbilane pre-uroporphyrinogen in several discrete steps. This chain is Porphobilinogen deaminase, found in Chlorobium phaeobacteroides (strain DSM 266 / SMG 266 / 2430).